The primary structure comprises 476 residues: Aspartyl/glutamyl-tRNA(Asn/Gln) amidotransferase subunit B (476 aa).

Belongs to the GatB/GatE family. GatB subfamily. Heterotrimer of A, B and C subunits.

It carries out the reaction L-glutamyl-tRNA(Gln) + L-glutamine + ATP + H2O = L-glutaminyl-tRNA(Gln) + L-glutamate + ADP + phosphate + H(+). The catalysed reaction is L-aspartyl-tRNA(Asn) + L-glutamine + ATP + H2O = L-asparaginyl-tRNA(Asn) + L-glutamate + ADP + phosphate + 2 H(+). Its function is as follows. Allows the formation of correctly charged Asn-tRNA(Asn) or Gln-tRNA(Gln) through the transamidation of misacylated Asp-tRNA(Asn) or Glu-tRNA(Gln) in organisms which lack either or both of asparaginyl-tRNA or glutaminyl-tRNA synthetases. The reaction takes place in the presence of glutamine and ATP through an activated phospho-Asp-tRNA(Asn) or phospho-Glu-tRNA(Gln). This is Aspartyl/glutamyl-tRNA(Asn/Gln) amidotransferase subunit B from Clostridium botulinum (strain Kyoto / Type A2).